The chain runs to 160 residues: Putative antiporter subunit mnhE2 (160 aa).

3 helical membrane passes run 22–42, 55–75, and 100–120; these read HFKFSTFFSGYLIGLIVIYIL, IWVAIKFLGVYLYQLITSSIS, and SDWSITFLTILIIITPGSTVI.

The protein belongs to the CPA3 antiporters (TC 2.A.63) subunit E family. In terms of assembly, may form a heterooligomeric complex that consists of seven subunits: mnhA2, mnhB2, mnhC2, mnhD2, mnhE2, mnhF2 and mnhG2.

The protein localises to the cell membrane. This is Putative antiporter subunit mnhE2 (mnhE2) from Staphylococcus aureus (strain USA300).